We begin with the raw amino-acid sequence, 526 residues long: MSYSQQVNKRRTFAIISHPDAGKTTITEKVLLYGNAIQKAGSVKGKGSQAHAKSDWMEMEKQRGISITTSVMQFPYHDCLVNLLDTPGHEDFSEDTYRTLTAVDSCLMVIDSAKGVEERTIKLMEVTRLRDTPILTFMNKLDRDIRDPMELLDEVESVLKIRCAPITWPIGCGKLFKGVYHLYKDETYLYQSGQGHTIQDVRIIKGLNNVDLDRAVGEDLARQLRDELELVKGASNEFDHDLFIRGELTPVFFGTALGNFGVDHFLDGLTQWAPAPQARQADCRLVESAEEKLTGFVFKIQANMDPKHRDRVAFMRIVSGKYEKGMKLKQVRLGKEVVLSDALTFMAGDRSHAEEAYAGDIIGLHNHGTIQIGDTFTQGEDLKFTGIPNFAPELFRRIRLKDPLKQKQLLKGLVQLSEEGAVQVFRPLTNNDLIVGAVGVLQFDVVVSRLKSEYNVEAVYETVNVAAARWVECSEAKKLEEFKRKNEQNLALDGGDSLTYIAPTMVNLNLTQERYPDIQFFKTREH.

Residues 8-277 enclose the tr-type G domain; it reads NKRRTFAIIS…GLTQWAPAPQ (270 aa). Residues 17-24, 85-89, and 139-142 each bind GTP; these read SHPDAGKT, DTPGH, and NKLD.

Belongs to the TRAFAC class translation factor GTPase superfamily. Classic translation factor GTPase family. PrfC subfamily.

The protein resides in the cytoplasm. Functionally, increases the formation of ribosomal termination complexes and stimulates activities of RF-1 and RF-2. It binds guanine nucleotides and has strong preference for UGA stop codons. It may interact directly with the ribosome. The stimulation of RF-1 and RF-2 is significantly reduced by GTP and GDP, but not by GMP. The protein is Peptide chain release factor 3 of Histophilus somni (strain 129Pt) (Haemophilus somnus).